The following is a 488-amino-acid chain: Bifunctional protein HldE (488 aa).

The tract at residues 1–332 (MRESFLDTIQ…QELQSQQSAA (332 aa)) is ribokinase. ATP is bound at residue 208–211 (NKRE). The active site involves D277. The interval 359–488 (FTNGCFDLLH…TSNIIRKLAS (130 aa)) is cytidylyltransferase.

The protein in the N-terminal section; belongs to the carbohydrate kinase PfkB family. In the C-terminal section; belongs to the cytidylyltransferase family. As to quaternary structure, homodimer.

The enzyme catalyses D-glycero-beta-D-manno-heptose 7-phosphate + ATP = D-glycero-beta-D-manno-heptose 1,7-bisphosphate + ADP + H(+). It carries out the reaction D-glycero-beta-D-manno-heptose 1-phosphate + ATP + H(+) = ADP-D-glycero-beta-D-manno-heptose + diphosphate. It participates in nucleotide-sugar biosynthesis; ADP-L-glycero-beta-D-manno-heptose biosynthesis; ADP-L-glycero-beta-D-manno-heptose from D-glycero-beta-D-manno-heptose 7-phosphate: step 1/4. Its pathway is nucleotide-sugar biosynthesis; ADP-L-glycero-beta-D-manno-heptose biosynthesis; ADP-L-glycero-beta-D-manno-heptose from D-glycero-beta-D-manno-heptose 7-phosphate: step 3/4. Functionally, catalyzes the phosphorylation of D-glycero-D-manno-heptose 7-phosphate at the C-1 position to selectively form D-glycero-beta-D-manno-heptose-1,7-bisphosphate. In terms of biological role, catalyzes the ADP transfer from ATP to D-glycero-beta-D-manno-heptose 1-phosphate, yielding ADP-D-glycero-beta-D-manno-heptose. In Methylobacillus flagellatus (strain ATCC 51484 / DSM 6875 / VKM B-1610 / KT), this protein is Bifunctional protein HldE.